A 57-amino-acid polypeptide reads, in one-letter code: Potassium channel toxin MeuTXKalpha2 (57 aa).

Positions 1-19 are cleaved as a signal peptide; sequence MSRLYAIILIALVFNVIMT. Residues 20–28 constitute a propeptide that is removed on maturation; that stretch reads IMPDMKVEA. Intrachain disulfides connect Cys-31–Cys-47, Cys-34–Cys-52, and Cys-38–Cys-54.

It belongs to the short scorpion toxin superfamily. Potassium channel inhibitor family. Alpha-KTx 08 subfamily. In terms of tissue distribution, expressed by the venom gland.

It is found in the secreted. Inhibits Kv1.1/KCNA1, Kv1.3/KCNA3 and Shaker potassium channels. This chain is Potassium channel toxin MeuTXKalpha2, found in Mesobuthus eupeus (Lesser Asian scorpion).